Here is a 1368-residue protein sequence, read N- to C-terminus: DNA-directed RNA polymerase subunit beta (1368 aa).

It belongs to the RNA polymerase beta chain family. In terms of assembly, the RNAP catalytic core consists of 2 alpha, 1 beta, 1 beta' and 1 omega subunit. When a sigma factor is associated with the core the holoenzyme is formed, which can initiate transcription.

It carries out the reaction RNA(n) + a ribonucleoside 5'-triphosphate = RNA(n+1) + diphosphate. DNA-dependent RNA polymerase catalyzes the transcription of DNA into RNA using the four ribonucleoside triphosphates as substrates. The polypeptide is DNA-directed RNA polymerase subunit beta (Cupriavidus necator (strain ATCC 17699 / DSM 428 / KCTC 22496 / NCIMB 10442 / H16 / Stanier 337) (Ralstonia eutropha)).